The chain runs to 362 residues: Phospho-N-acetylmuramoyl-pentapeptide-transferase (362 aa).

Helical transmembrane passes span 21-41 (YITF…FLLG), 75-95 (TMGG…WADL), 100-120 (VWAV…DDFL), 136-156 (LVVQ…LMPG), 170-190 (LMIP…MGAS), 201-221 (GLAI…AYLV), 225-245 (IFSH…AVFC), 247-267 (ALIG…AVFM), 290-310 (IVLA…IVQV), and 339-359 (TVVI…LATL).

It belongs to the glycosyltransferase 4 family. MraY subfamily. The cofactor is Mg(2+).

It is found in the cell inner membrane. It carries out the reaction UDP-N-acetyl-alpha-D-muramoyl-L-alanyl-gamma-D-glutamyl-meso-2,6-diaminopimeloyl-D-alanyl-D-alanine + di-trans,octa-cis-undecaprenyl phosphate = di-trans,octa-cis-undecaprenyl diphospho-N-acetyl-alpha-D-muramoyl-L-alanyl-D-glutamyl-meso-2,6-diaminopimeloyl-D-alanyl-D-alanine + UMP. It participates in cell wall biogenesis; peptidoglycan biosynthesis. In terms of biological role, catalyzes the initial step of the lipid cycle reactions in the biosynthesis of the cell wall peptidoglycan: transfers peptidoglycan precursor phospho-MurNAc-pentapeptide from UDP-MurNAc-pentapeptide onto the lipid carrier undecaprenyl phosphate, yielding undecaprenyl-pyrophosphoryl-MurNAc-pentapeptide, known as lipid I. This chain is Phospho-N-acetylmuramoyl-pentapeptide-transferase, found in Acidiphilium cryptum (strain JF-5).